The sequence spans 129 residues: Acyl carrier protein 2, chloroplastic (129 aa).

The transit peptide at 1–49 directs the protein to the chloroplast; the sequence is MASAAASAVSFARPVKAICVNSVSFSALRKDNVSFRLQPVPQRFSVCCA. A Carrier domain is found at 52-127; the sequence is KETVEKVCDI…DAANLIDSLV (76 aa). The residue at position 87 (S87) is an O-(pantetheine 4'-phosphoryl)serine.

This sequence belongs to the acyl carrier protein (ACP) family. In terms of processing, 4'-phosphopantetheine is transferred from CoA to a specific serine of apo-ACP by acpS. This modification is essential for activity because fatty acids are bound in thioester linkage to the sulfhydryl of the prosthetic group.

The protein resides in the plastid. It is found in the chloroplast. The protein operates within lipid metabolism; fatty acid biosynthesis. Its function is as follows. Carrier of the growing fatty acid chain in fatty acid biosynthesis. The sequence is that of Acyl carrier protein 2, chloroplastic (ACL1.2) from Hordeum vulgare (Barley).